The sequence spans 175 residues: Transcription factor HES-3 (175 aa).

The bHLH domain maps to 1-49 (MEKKRRARINLSLEQLRSLLERHYSHQIRKRKLEKADILELSVKYVRSL). The Orange domain maps to 65 to 98 (YPSGFRGGLPGSSQRLRPGEDDSGLRCPLLLQRR). The span at 124-145 (PGPPAGGSQSPQSPFPPLGGLL) shows a compositional bias: low complexity. Positions 124–175 (PGPPAGGSQSPQSPFPPLGGLLESSTGILAPPPASNCQAENPRPGFRVWRPW) are disordered. A WRPW motif motif is present at residues 172 to 175 (WRPW).

Transcription repression requires formation of a complex with a corepressor protein of the Groucho/TLE family. Expressed exclusively in Purkinje cells.

It localises to the nucleus. Transcriptional repressor of genes that require a bHLH protein for their transcription. In Rattus norvegicus (Rat), this protein is Transcription factor HES-3 (Hes3).